The primary structure comprises 338 residues: Ketol-acid reductoisomerase (NADP(+)) (338 aa).

In terms of domain architecture, KARI N-terminal Rossmann spans 1–181; the sequence is MKVYYDKDAD…GGTRGGVIET (181 aa). Residues 24-27, arginine 47, and serine 52 each bind NADP(+); that span reads YGSQ. Histidine 107 is a catalytic residue. Glycine 133 provides a ligand contact to NADP(+). A KARI C-terminal knotted domain is found at 182–327; the sequence is TFKEETETDL…AKLRDMMPWI (146 aa). Positions 190, 194, 226, and 230 each coordinate Mg(2+). Substrate is bound at residue serine 251.

The protein belongs to the ketol-acid reductoisomerase family. The cofactor is Mg(2+).

The enzyme catalyses (2R)-2,3-dihydroxy-3-methylbutanoate + NADP(+) = (2S)-2-acetolactate + NADPH + H(+). It catalyses the reaction (2R,3R)-2,3-dihydroxy-3-methylpentanoate + NADP(+) = (S)-2-ethyl-2-hydroxy-3-oxobutanoate + NADPH + H(+). Its pathway is amino-acid biosynthesis; L-isoleucine biosynthesis; L-isoleucine from 2-oxobutanoate: step 2/4. It participates in amino-acid biosynthesis; L-valine biosynthesis; L-valine from pyruvate: step 2/4. Involved in the biosynthesis of branched-chain amino acids (BCAA). Catalyzes an alkyl-migration followed by a ketol-acid reduction of (S)-2-acetolactate (S2AL) to yield (R)-2,3-dihydroxy-isovalerate. In the isomerase reaction, S2AL is rearranged via a Mg-dependent methyl migration to produce 3-hydroxy-3-methyl-2-ketobutyrate (HMKB). In the reductase reaction, this 2-ketoacid undergoes a metal-dependent reduction by NADPH to yield (R)-2,3-dihydroxy-isovalerate. This is Ketol-acid reductoisomerase (NADP(+)) from Nitrosomonas europaea (strain ATCC 19718 / CIP 103999 / KCTC 2705 / NBRC 14298).